Here is a 456-residue protein sequence, read N- to C-terminus: Adenylosuccinate lyase (456 aa).

N(6)-(1,2-dicarboxyethyl)-AMP is bound by residues 15–16, 90–92, and 122–123; these read RY, NHD, and TS. Histidine 171 (proton donor/acceptor) is an active-site residue. Residue glutamine 248 participates in N(6)-(1,2-dicarboxyethyl)-AMP binding. Serine 296 acts as the Proton donor/acceptor in catalysis. N(6)-(1,2-dicarboxyethyl)-AMP-binding positions include serine 297, 302-304, asparagine 310, arginine 336, and 341-345; these read KVN and STVLR.

The protein belongs to the lyase 1 family. Adenylosuccinate lyase subfamily. In terms of assembly, homotetramer.

It carries out the reaction N(6)-(1,2-dicarboxyethyl)-AMP = fumarate + AMP. The enzyme catalyses (2S)-2-[5-amino-1-(5-phospho-beta-D-ribosyl)imidazole-4-carboxamido]succinate = 5-amino-1-(5-phospho-beta-D-ribosyl)imidazole-4-carboxamide + fumarate. The catalysed reaction is (2S)-2-amino-2'-deoxyadenylo-succinate = dZMP + fumarate. It participates in purine metabolism; AMP biosynthesis via de novo pathway; AMP from IMP: step 2/2. Its pathway is purine metabolism; IMP biosynthesis via de novo pathway; 5-amino-1-(5-phospho-D-ribosyl)imidazole-4-carboxamide from 5-amino-1-(5-phospho-D-ribosyl)imidazole-4-carboxylate: step 2/2. The protein operates within purine metabolism. Catalyzes two reactions in de novo purine nucleotide biosynthesis. Catalyzes the breakdown of 5-aminoimidazole- (N-succinylocarboxamide) ribotide (SAICAR or 2-[5-amino-1-(5-phospho-beta-D-ribosyl)imidazole-4-carboxamido]succinate) to 5-aminoimidazole-4-carboxamide ribotide (AICAR or 5-amino-1-(5-phospho-beta-D-ribosyl)imidazole-4-carboxamide) and fumarate, and of adenylosuccinate (ADS or N(6)-(1,2-dicarboxyethyl)-AMP) to adenosine monophosphate (AMP) and fumarate. Its function is as follows. (Microbial infection) Catalyzes the conversion of 2-amino-2'-deoxyadenylo-succinate to dZMP and fumarate, when the bacterium is infected by a phage that produces the substrate of this reaction, a step in the synthesis of dZTP (2-amino-2'-deoxyadenosine 5'-triphosphate), which is a nucleotide then used by the phage as a DNA polymerase substrate. This is Adenylosuccinate lyase from Vibrio cholerae serotype O1 (strain ATCC 39541 / Classical Ogawa 395 / O395).